Here is a 258-residue protein sequence, read N- to C-terminus: Imidazole glycerol phosphate synthase subunit HisF (258 aa).

Catalysis depends on residues Asp11 and Asp130.

The protein belongs to the HisA/HisF family. In terms of assembly, heterodimer of HisH and HisF.

The protein resides in the cytoplasm. It catalyses the reaction 5-[(5-phospho-1-deoxy-D-ribulos-1-ylimino)methylamino]-1-(5-phospho-beta-D-ribosyl)imidazole-4-carboxamide + L-glutamine = D-erythro-1-(imidazol-4-yl)glycerol 3-phosphate + 5-amino-1-(5-phospho-beta-D-ribosyl)imidazole-4-carboxamide + L-glutamate + H(+). It participates in amino-acid biosynthesis; L-histidine biosynthesis; L-histidine from 5-phospho-alpha-D-ribose 1-diphosphate: step 5/9. IGPS catalyzes the conversion of PRFAR and glutamine to IGP, AICAR and glutamate. The HisF subunit catalyzes the cyclization activity that produces IGP and AICAR from PRFAR using the ammonia provided by the HisH subunit. The chain is Imidazole glycerol phosphate synthase subunit HisF from Xanthomonas euvesicatoria pv. vesicatoria (strain 85-10) (Xanthomonas campestris pv. vesicatoria).